The following is a 272-amino-acid chain: Putative phosphoenolpyruvate synthase regulatory protein (272 aa).

151–158 (GVSRSGKT) serves as a coordination point for ADP.

It belongs to the pyruvate, phosphate/water dikinase regulatory protein family. PSRP subfamily.

It carries out the reaction [pyruvate, water dikinase] + ADP = [pyruvate, water dikinase]-phosphate + AMP + H(+). The catalysed reaction is [pyruvate, water dikinase]-phosphate + phosphate + H(+) = [pyruvate, water dikinase] + diphosphate. In terms of biological role, bifunctional serine/threonine kinase and phosphorylase involved in the regulation of the phosphoenolpyruvate synthase (PEPS) by catalyzing its phosphorylation/dephosphorylation. This Desulfotalea psychrophila (strain LSv54 / DSM 12343) protein is Putative phosphoenolpyruvate synthase regulatory protein.